A 747-amino-acid chain; its full sequence is Elongation factor G, mitochondrial (747 aa).

The N-terminal 16 residues, 1–16 (MSLIMRVLNGNLSLRL), are a transit peptide targeting the mitochondrion. A tr-type G domain is found at 42–319 (ERIRNIGISA…AIIDYLPNPG (278 aa)). Residues 51–58 (AHIDSGKT), 118–122 (DTPGH), and 172–175 (NKLD) each bind GTP.

It belongs to the TRAFAC class translation factor GTPase superfamily. Classic translation factor GTPase family. EF-G/EF-2 subfamily.

The protein resides in the mitochondrion. It functions in the pathway protein biosynthesis; polypeptide chain elongation. Its function is as follows. Mitochondrial GTPase that catalyzes the GTP-dependent ribosomal translocation step during translation elongation. During this step, the ribosome changes from the pre-translocational (PRE) to the post-translocational (POST) state as the newly formed A-site-bound peptidyl-tRNA and P-site-bound deacylated tRNA move to the P and E sites, respectively. Catalyzes the coordinated movement of the two tRNA molecules, the mRNA and conformational changes in the ribosome. Essential during development as it acts as a retrograde signal from mitochondria to the nucleus to slow down cell proliferation if mitochondrial energy output is low. This Drosophila grimshawi (Hawaiian fruit fly) protein is Elongation factor G, mitochondrial.